The following is a 71-amino-acid chain: Defensin-like protein 124 (71 aa).

The signal sequence occupies residues 1–25; sequence MSKPTVIVIFMAILVLGMATKETQG. 4 disulfide bridges follow: cysteine 28-cysteine 71, cysteine 40-cysteine 60, cysteine 45-cysteine 65, and cysteine 49-cysteine 67.

It belongs to the DEFL family.

The protein resides in the secreted. The chain is Defensin-like protein 124 (LCR16) from Arabidopsis thaliana (Mouse-ear cress).